The chain runs to 248 residues: Probable transcriptional regulatory protein BOV_1660 (248 aa).

This sequence belongs to the TACO1 family.

The protein localises to the cytoplasm. In Brucella ovis (strain ATCC 25840 / 63/290 / NCTC 10512), this protein is Probable transcriptional regulatory protein BOV_1660.